We begin with the raw amino-acid sequence, 223 residues long: Ribose-5-phosphate isomerase A (223 aa).

Residues 29 to 32 (TGST), 82 to 85 (DGAD), and 95 to 98 (KGGG) contribute to the substrate site. The active-site Proton acceptor is the Glu104. Substrate is bound at residue Lys122.

Belongs to the ribose 5-phosphate isomerase family. As to quaternary structure, homodimer.

The enzyme catalyses aldehydo-D-ribose 5-phosphate = D-ribulose 5-phosphate. The protein operates within carbohydrate degradation; pentose phosphate pathway; D-ribose 5-phosphate from D-ribulose 5-phosphate (non-oxidative stage): step 1/1. Its function is as follows. Catalyzes the reversible conversion of ribose-5-phosphate to ribulose 5-phosphate. The polypeptide is Ribose-5-phosphate isomerase A (Neisseria meningitidis serogroup B (strain ATCC BAA-335 / MC58)).